Consider the following 500-residue polypeptide: Cytochrome P450 2C11 (500 aa).

Heme is bound at residue cysteine 435.

It belongs to the cytochrome P450 family. Requires heme as cofactor. Liver and kidney; male-specific.

The protein resides in the endoplasmic reticulum membrane. The protein localises to the microsome membrane. It catalyses the reaction an organic molecule + reduced [NADPH--hemoprotein reductase] + O2 = an alcohol + oxidized [NADPH--hemoprotein reductase] + H2O + H(+). The enzyme catalyses testosterone + reduced [NADPH--hemoprotein reductase] + O2 = 2alpha,17beta-dihydroxyandrost-4-en-3-one + oxidized [NADPH--hemoprotein reductase] + H2O + H(+). The catalysed reaction is testosterone + reduced [NADPH--hemoprotein reductase] + O2 = 16alpha,17beta-dihydroxyandrost-4-en-3-one + oxidized [NADPH--hemoprotein reductase] + H2O + H(+). It carries out the reaction (5Z,8Z,11Z,14Z)-eicosatetraenoate + reduced [NADPH--hemoprotein reductase] + O2 = (8R,9S)-epoxy-(5Z,11Z,14Z)-eicosatrienoate + oxidized [NADPH--hemoprotein reductase] + H2O + H(+). It catalyses the reaction (5Z,8Z,11Z,14Z)-eicosatetraenoate + reduced [NADPH--hemoprotein reductase] + O2 = (8S,9R)-epoxy-(5Z,11Z,14Z)-eicosatrienoate + oxidized [NADPH--hemoprotein reductase] + H2O + H(+). The enzyme catalyses (5Z,8Z,11Z,14Z)-eicosatetraenoate + reduced [NADPH--hemoprotein reductase] + O2 = (11R,12S)-epoxy-(5Z,8Z,14Z)-eicosatrienoate + oxidized [NADPH--hemoprotein reductase] + H2O + H(+). The catalysed reaction is (5Z,8Z,11Z,14Z)-eicosatetraenoate + reduced [NADPH--hemoprotein reductase] + O2 = (11S,12R)-epoxy-(5Z,8Z,14Z)-eicosatrienoate + oxidized [NADPH--hemoprotein reductase] + H2O + H(+). It carries out the reaction (5Z,8Z,11Z,14Z)-eicosatetraenoate + reduced [NADPH--hemoprotein reductase] + O2 = (14R,15S)-epoxy-(5Z,8Z,11Z)-eicosatrienoate + oxidized [NADPH--hemoprotein reductase] + H2O + H(+). It catalyses the reaction (5Z,8Z,11Z,14Z)-eicosatetraenoate + reduced [NADPH--hemoprotein reductase] + O2 = (14S,15R)-epoxy-(5Z,8Z,11Z)-eicosatrienoate + oxidized [NADPH--hemoprotein reductase] + H2O + H(+). The enzyme catalyses (5Z,8Z,11Z,14Z,17Z)-eicosapentaenoate + reduced [NADPH--hemoprotein reductase] + O2 = 8,9-epoxy-(5Z,11Z,14Z,17Z)-eicosatetraenoate + oxidized [NADPH--hemoprotein reductase] + H2O + H(+). The catalysed reaction is (5Z,8Z,11Z,14Z,17Z)-eicosapentaenoate + reduced [NADPH--hemoprotein reductase] + O2 = 11,12-epoxy-(5Z,8Z,14Z,17Z)-eicosatetraenoate + oxidized [NADPH--hemoprotein reductase] + H2O + H(+). It carries out the reaction (5Z,8Z,11Z,14Z,17Z)-eicosapentaenoate + reduced [NADPH--hemoprotein reductase] + O2 = 14,15-epoxy-(5Z,8Z,11Z,17Z)-eicosatetraenoate + oxidized [NADPH--hemoprotein reductase] + H2O + H(+). It catalyses the reaction (5Z,8Z,11Z,14Z,17Z)-eicosapentaenoate + reduced [NADPH--hemoprotein reductase] + O2 = (17S,18R)-epoxy-(5Z,8Z,11Z,14Z)-eicosatetraenoate + oxidized [NADPH--hemoprotein reductase] + H2O + H(+). The enzyme catalyses (5Z,8Z,11Z,14Z,17Z)-eicosapentaenoate + reduced [NADPH--hemoprotein reductase] + O2 = (17R,18S)-epoxy-(5Z,8Z,11Z,14Z)-eicosatetraenoate + oxidized [NADPH--hemoprotein reductase] + H2O + H(+). It participates in lipid metabolism; arachidonate metabolism. Its pathway is steroid metabolism. A cytochrome P450 monooxygenase involved in the metabolism of steroid hormones and fatty acids. Catalyzes the hydroxylation of carbon-hydrogen bonds. Metabolizes testosterone to 2alpha- and 16alpha-hydroxytestosterone. Catalyzes the epoxidation of double bonds of polyunsaturated fatty acids (PUFAs). Converts arachidonic acid (ARA, C20:4(n-6)) primarily to epoxyeicosatrienoic acid (EET) regioisomers, 8,9-, 11,12-, and 14,15-EET, with both R,S and S,R stereochemistry. Preferentially produces 11R,12S-EET enantiomer. To a lesser extent, catalyzes the hydroxylation of arachidonic acid producing hydroxyeicosatetraenoates (HETEs). Metabolizes eicosapentaenoic acid (EPA, C20:5(n-3)) to epoxyeicosatetraenoic acid (EETeTr) regioisomers, 8,9-, 11,12-, 14,15-, and 17,18-EETeTr, preferentially producing 17R,18S-EETeTr enantiomer. Mechanistically, uses molecular oxygen inserting one oxygen atom into a substrate, and reducing the second into a water molecule, with two electrons provided by NADPH via cytochrome P450 reductase (NADPH--hemoprotein reductase). This is Cytochrome P450 2C11 (Cyp2c11) from Rattus norvegicus (Rat).